The chain runs to 262 residues: Ribonuclease 3 (262 aa).

The RNase III domain occupies Leu-18–Gly-141. Glu-59 lines the Mg(2+) pocket. Asp-63 is an active-site residue. Mg(2+)-binding residues include Asp-127 and Glu-130. The active site involves Glu-130.

This sequence belongs to the ribonuclease III family. Homodimer. Mg(2+) is required as a cofactor.

Its subcellular location is the cytoplasm. It carries out the reaction Endonucleolytic cleavage to 5'-phosphomonoester.. Functionally, digests double-stranded RNA. Involved in the processing of primary rRNA transcript to yield the immediate precursors to the large and small rRNAs (23S and 16S). Processes some mRNAs, and tRNAs when they are encoded in the rRNA operon. Processes pre-crRNA and tracrRNA of type II CRISPR loci if present in the organism. This chain is Ribonuclease 3, found in Mycoplasma genitalium (strain ATCC 33530 / DSM 19775 / NCTC 10195 / G37) (Mycoplasmoides genitalium).